Here is a 126-residue protein sequence, read N- to C-terminus: RutC family protein bbp_334 (126 aa).

Belongs to the RutC family.

This chain is RutC family protein bbp_334, found in Buchnera aphidicola subsp. Baizongia pistaciae (strain Bp).